Reading from the N-terminus, the 886-residue chain is DNA gyrase subunit A (886 aa).

Residues 35 to 501 enclose the Topo IIA-type catalytic domain; it reads LPDVRDGLKP…GFEDLEDEDL (467 aa). Tyrosine 123 (O-(5'-phospho-DNA)-tyrosine intermediate) is an active-site residue. The GyrA-box signature appears at 528–534; sequence QNRGGRG. The interval 810–860 is disordered; it reads VKEDADEENEDEQSTVSEDGTEQQREAVVNDETPGNAIHTEVIDSEVNDED. Over residues 813 to 822 the composition is skewed to acidic residues; it reads DADEENEDEQ.

It belongs to the type II topoisomerase GyrA/ParC subunit family. Heterotetramer, composed of two GyrA and two GyrB chains. In the heterotetramer, GyrA contains the active site tyrosine that forms a transient covalent intermediate with DNA, while GyrB binds cofactors and catalyzes ATP hydrolysis.

The protein resides in the cytoplasm. The catalysed reaction is ATP-dependent breakage, passage and rejoining of double-stranded DNA.. Its function is as follows. A type II topoisomerase that negatively supercoils closed circular double-stranded (ds) DNA in an ATP-dependent manner to modulate DNA topology and maintain chromosomes in an underwound state. Negative supercoiling favors strand separation, and DNA replication, transcription, recombination and repair, all of which involve strand separation. Also able to catalyze the interconversion of other topological isomers of dsDNA rings, including catenanes and knotted rings. Type II topoisomerases break and join 2 DNA strands simultaneously in an ATP-dependent manner. This chain is DNA gyrase subunit A, found in Staphylococcus aureus (strain MRSA252).